A 620-amino-acid polypeptide reads, in one-letter code: Tyrosine-protein kinase ITK/TSK (620 aa).

The PH domain maps to 4–111 (FILLEEQLIK…WVLALKEETR (108 aa)). A Btk-type zinc finger spans residues 113–149 (NNSLVPKYHPNFWMDGKWRCCSQLEKLATGCAQYDPT). Zn(2+) contacts are provided by H121, C132, C133, and C143. The region spanning 171–231 (PEETVVIALY…PSSYLVEKSP (61 aa)) is the SH3 domain. Phosphotyrosine; by autocatalysis is present on Y180. One can recognise an SH2 domain in the interval 239 to 338 (WYNKSISRDK…GLVTRLRYPV (100 aa)). One can recognise a Protein kinase domain in the interval 363-615 (LTFVQEIGSG…SRLLRQLAEI (253 aa)). Residues 369-377 (IGSGQFGLV) and K391 contribute to the ATP site. D482 acts as the Proton acceptor in catalysis. Y512 carries the post-translational modification Phosphotyrosine; by LCK. S565 bears the Phosphoserine mark.

Belongs to the protein kinase superfamily. Tyr protein kinase family. TEC subfamily. As to quaternary structure, homooligomerizes; this association negatively regulates kinase activity. Interacts with PPIA/CYPA; this interaction regulates TCR signal strength via a proline-directed conformational switch in ITK. Interacts with THEMIS. Interacts with FASLG. Interacts with VAV1; this interaction is important for VAV1 localization and TCR-induced actin polarization. Interacts with TBX21. Zn(2+) serves as cofactor. Post-translationally, phosphorylated at Tyr-512 in the activation loop of the kinase domain by LCK. Subsequent autophosphorylation at Tyr-180 leads to the kinase activation. The autophosphorylated Tyr-180 lies within the substrate binding sequence of the SH3 domain. In terms of processing, ubiquitinated. T-cell lines and natural killer cell lines.

Its subcellular location is the cytoplasm. It localises to the nucleus. The enzyme catalyses L-tyrosyl-[protein] + ATP = O-phospho-L-tyrosyl-[protein] + ADP + H(+). Functionally, tyrosine kinase that plays an essential role in regulation of the adaptive immune response. Regulates the development, function and differentiation of conventional T-cells and nonconventional NKT-cells. When antigen presenting cells (APC) activate T-cell receptor (TCR), a series of phosphorylation lead to the recruitment of ITK to the cell membrane, in the vicinity of the stimulated TCR receptor, where it is phosphorylated by LCK. Phosphorylation leads to ITK autophosphorylation and full activation. Once activated, phosphorylates PLCG1, leading to the activation of this lipase and subsequent cleavage of its substrates. In turn, the endoplasmic reticulum releases calcium in the cytoplasm and the nuclear activator of activated T-cells (NFAT) translocates into the nucleus to perform its transcriptional duty. Phosphorylates 2 essential adapter proteins: the linker for activation of T-cells/LAT protein and LCP2. Then, a large number of signaling molecules such as VAV1 are recruited and ultimately lead to lymphokine production, T-cell proliferation and differentiation. Required for TCR-mediated calcium response in gamma-delta T-cells, may also be involved in the modulation of the transcriptomic signature in the Vgamma2-positive subset of immature gamma-delta T-cells. Phosphorylates TBX21 at 'Tyr-530' and mediates its interaction with GATA3. The protein is Tyrosine-protein kinase ITK/TSK (ITK) of Homo sapiens (Human).